The chain runs to 470 residues: Proton-coupled amino acid transporter 3 (470 aa).

The Cytoplasmic segment spans residues 1 to 46 (MSLLGRDYNSELNSLDNGPQSPSESSSSITSENVHPAGEAGLSMMQ). A compositionally biased stretch (polar residues) spans 10–20 (SELNSLDNGPQ). The tract at residues 10–33 (SELNSLDNGPQSPSESSSSITSEN) is disordered. The segment covering 21–31 (SPSESSSSITS) has biased composition (low complexity). The helical transmembrane segment at 47 to 67 (TLIHLLKCNIGTGLLGLPLAI) threads the bilayer. Residues 68–71 (KNAG) lie on the Extracellular side of the membrane. A helical transmembrane segment spans residues 72–92 (LLVGPVSLLAIGVLTVHCMVI). Residues 93–137 (LLNCAQHLSQRLQKTFVNYGEATMYGLETCPNTWLRAHAVWGRYT) are Cytoplasmic-facing. Residues 138 to 158 (VSFLLVITQLGFCSVYFMFMA) traverse the membrane as a helical segment. At 159–185 (DNLQQMVEKAHVTSNICQPREILTLTP) the chain is on the extracellular side. The chain crosses the membrane as a helical span at residues 186–206 (ILDIRFYMLIILPFLILLVFI). The Cytoplasmic segment spans residues 207-210 (QNLK). Residues 211 to 231 (VLSVFSTLANITTLGSMALIF) form a helical membrane-spanning segment. At 232 to 252 (EYIMEGIPYPSNLPLMANWKT) the chain is on the extracellular side. Residues 253–273 (FLLFFGTAIFTFEGVGMVLPL) traverse the membrane as a helical segment. The Cytoplasmic portion of the chain corresponds to 274 to 284 (KNQMKHPQQFS). A helical membrane pass occupies residues 285 to 305 (FVLYLGMSIVIILYILLGTLG). The Extracellular segment spans residues 306–337 (YMKFGSDTQASITLNLPNCWLYQSVKLMYSIG). The chain crosses the membrane as a helical span at residues 338–358 (IFFTYALQFHVPAEIIIPFAI). Topologically, residues 359-367 (SQVSESWAL) are cytoplasmic. The helical transmembrane segment at 368 to 388 (FVDLSVRSALVCLTCVSAILI) threads the bilayer. Residues 389 to 392 (PRLD) are Extracellular-facing. A helical transmembrane segment spans residues 393–413 (LVISLVGSVSSSALALIIPAL). Residues 414 to 425 (LEIVIFYSEDMS) lie on the Cytoplasmic side of the membrane. A helical membrane pass occupies residues 426–446 (CVTIAKDIMISIVGLLGCIFG). The Extracellular segment spans residues 447 to 470 (TYQALYELPQPISHSMANSTGVHA).

This sequence belongs to the amino acid/polyamine transporter 2 family. In terms of tissue distribution, specifically expressed in testis.

It localises to the membrane. In Homo sapiens (Human), this protein is Proton-coupled amino acid transporter 3 (SLC36A3).